We begin with the raw amino-acid sequence, 129 residues long: C-phycocyanin beta subunit (129 aa).

At N62 the chain carries N4-methylasparagine. C116 serves as a coordination point for (2R,3E)-phycocyanobilin.

The protein belongs to the phycobiliprotein family. In terms of assembly, heterodimer of an alpha and a beta subunit, which further assembles into trimers and the trimers into hexamers. Post-translationally, two isomers exist. Contains two covalently linked bilin chromophores.

The protein resides in the cellular thylakoid membrane. In terms of biological role, light-harvesting photosynthetic bile pigment-protein from the phycobiliprotein complex (phycobilisome, PBS). Phycocyanin is the major phycobiliprotein in the PBS rod. In Aphanizomenon flos-aquae, this protein is C-phycocyanin beta subunit.